A 50-amino-acid polypeptide reads, in one-letter code: Small ribosomal subunit protein eS31 (50 aa).

Zn(2+)-binding residues include C22, C25, C40, and C43. Residues 22–43 (CPRCGPGVFMADHGDRWACGKC) form a C4-type zinc finger.

It belongs to the eukaryotic ribosomal protein eS31 family. As to quaternary structure, part of the 30S ribosomal subunit. It depends on Zn(2+) as a cofactor.

The protein is Small ribosomal subunit protein eS31 of Pyrococcus furiosus (strain ATCC 43587 / DSM 3638 / JCM 8422 / Vc1).